A 100-amino-acid polypeptide reads, in one-letter code: Large ribosomal subunit protein uL23 (100 aa).

This sequence belongs to the universal ribosomal protein uL23 family. In terms of assembly, part of the 50S ribosomal subunit. Contacts protein L29, and trigger factor when it is bound to the ribosome.

One of the early assembly proteins it binds 23S rRNA. One of the proteins that surrounds the polypeptide exit tunnel on the outside of the ribosome. Forms the main docking site for trigger factor binding to the ribosome. The sequence is that of Large ribosomal subunit protein uL23 from Synechococcus elongatus (strain ATCC 33912 / PCC 7942 / FACHB-805) (Anacystis nidulans R2).